The sequence spans 828 residues: Leucine--tRNA ligase (828 aa).

The short motif at 42–52 (PYPSGTLHVGH) is the 'HIGH' region element. The short motif at 582-586 (KMSKS) is the 'KMSKS' region element. Lysine 585 serves as a coordination point for ATP.

The protein belongs to the class-I aminoacyl-tRNA synthetase family.

It localises to the cytoplasm. The catalysed reaction is tRNA(Leu) + L-leucine + ATP = L-leucyl-tRNA(Leu) + AMP + diphosphate. In Petrotoga mobilis (strain DSM 10674 / SJ95), this protein is Leucine--tRNA ligase.